The primary structure comprises 527 residues: UDP-glucuronosyltransferase 2A1 (527 aa).

The first 20 residues, 1-20, serve as a signal peptide directing secretion; that stretch reads MLNNLLLFSLQISLIGTTLG. Topologically, residues 21-491 are lumenal; the sequence is GNVLIWPMEG…TWFQYHSLDV (471 aa). Residues asparagine 49, leucine 313, and asparagine 347 are each glycosylated (N-linked (GlcNAc...) asparagine). The helical transmembrane segment at 492–512 threads the bilayer; it reads IGFLLVCVTTAIFLVIQCCLF. At 513–527 the chain is on the cytoplasmic side; it reads SCQKFGKIGKKKKRE.

This sequence belongs to the UDP-glycosyltransferase family. As to expression, olfactory epithelium, brain and fetal lung. Not present in liver.

It is found in the membrane. Its subcellular location is the endoplasmic reticulum membrane. It carries out the reaction glucuronate acceptor + UDP-alpha-D-glucuronate = acceptor beta-D-glucuronoside + UDP + H(+). The catalysed reaction is 16beta,17beta-estriol + UDP-alpha-D-glucuronate = 16beta,17beta-estriol 16-O-(beta-D-glucuronate) + UDP + H(+). The enzyme catalyses 16alpha,17alpha-estriol + UDP-alpha-D-glucuronate = 16alpha,17alpha-estriol 16-O-(beta-D-glucuronate) + UDP + H(+). It catalyses the reaction 17alpha-estradiol + UDP-alpha-D-glucuronate = 17alpha-estradiol 17-O-(beta-D-glucuronate) + UDP + H(+). It carries out the reaction 17alpha-estradiol + UDP-alpha-D-glucuronate = 17alpha-estradiol 3-O-(beta-D-glucuronate) + UDP + H(+). The catalysed reaction is 17beta-estradiol + UDP-alpha-D-glucuronate = 17beta-estradiol 3-O-(beta-D-glucuronate) + UDP + H(+). The enzyme catalyses 17beta-estradiol + UDP-alpha-D-glucuronate = 17beta-estradiol 17-O-(beta-D-glucuronate) + UDP + H(+). It catalyses the reaction testosterone + UDP-alpha-D-glucuronate = testosterone 17-O-(beta-D-glucuronate) + UDP + H(+). It carries out the reaction epitestosterone + UDP-alpha-D-glucuronate = epitestosterone 17-O-(beta-D-glucuronate) + UDP + H(+). The catalysed reaction is lithocholate + UDP-alpha-D-glucuronate = lithocholoyl-3-O-(beta-D-glucuronate) + UDP + H(+). The enzyme catalyses lithocholate + UDP-alpha-D-glucuronate = lithocholoyl-24-O-(beta-D-glucuronate) + UDP. It catalyses the reaction deoxycholate + UDP-alpha-D-glucuronate = deoxycholoyl-24-O-(beta-D-glucuronate) + UDP. It carries out the reaction hyodeoxycholate + UDP-alpha-D-glucuronate = hyodeoxycholoyl-24-O-(beta-D-glucuronate) + UDP. The catalysed reaction is hyocholate + UDP-alpha-D-glucuronate = hyocholoyl-24-O-(beta-D-glucuronate) + UDP. Its function is as follows. UDP-glucuronosyltransferase (UGT) that catalyzes phase II biotransformation reactions in which lipophilic substrates are conjugated with glucuronic acid to increase the metabolite's water solubility, thereby facilitating excretion into either the urine or bile. Essential for the elimination and detoxification of drugs, xenobiotics and endogenous compounds. Catalyzes the glucuronidation of endogenous steroid hormones such as androgens (testosterone and epitestosterone) and estrogens (estradiol and epiestriol). Contributes to bile acid (BA) detoxification by catalyzing the glucuronidation of BA substrates, which are natural detergents for dietary lipids absorption. Shows a high affinity to aliphatic odorants such as citronellol as well as olfactory tissue specificity, and therefore may be involved in olfaction. Shows a potential role in detoxification of toxic waste compounds in the amniotic fluid before birth, and air-born chemical after birth. This is UDP-glucuronosyltransferase 2A1 from Homo sapiens (Human).